Here is a 102-residue protein sequence, read N- to C-terminus: Carboxysome shell protein CcmK2 (102 aa).

One can recognise a BMC domain in the interval 4–90 (AVGMIETLGF…PHENLEYVLP (87 aa)).

This sequence belongs to the bacterial microcompartments protein family. CcmK subfamily. As to quaternary structure, homohexamer. Interacts with CcmO in the carboxysome. Interacts with CcmN.

The protein resides in the carboxysome. Its function is as follows. One of the shell proteins of the carboxysome, a polyhedral inclusion where RuBisCO (ribulose bisphosphate carboxylase, rbcL-rbcS) is sequestered. Assembles into hexamers which make sheets that form the facets of the polyhedral carboxysome. The hexamer central pore probably regulates metabolite flux. The major shell protein of the carboxysome, a polyhedral inclusion where RuBisCO (ribulose bisphosphate carboxylase, rbcL-rbcS) is sequestered. Hexamers make sheets that form the facets of the polyhedral carboxysome. The shell is 4.5 nm thick, as observed for CcmK hexamers. Required for recruitment of CcmO to the pre-carboxysome. In PCC 7942 there are several CcmK paralogs with presumably functional differences; replacing the central pore residues (34-37) with those of either CcmK4 from this organism (Tyr-Met-Arg-Ala) or from an alpha-type carboxysome forming cyanobacterium (CsoS1 of P.marinus strain MIT 9313, Arg-Glu-Phe-Val) allows the bacterium to make carboxysomes, but the expression level is too low to know if the carboxysome is functional for CO(2) fixation. In terms of biological role, beta-carboxysome assembly initiates when soluble RuBisCO is condensed into a liquid matrix in a pre-carboxysome by the RbcS-like domains of probably both CcmM58 and CcmM35. CcmN interacts with the N-terminus of CcmM58, and then recruits the CcmK2 major shell protein via CcmN's encapsulation peptide. Shell formation requires CcmK proteins and CcmO. CcmL caps the otherwise elongated carboxysome. Once fully encapsulated carboxysomes are formed, they migrate within the cell probably via interactions with the cytoskeleton. This chain is Carboxysome shell protein CcmK2, found in Synechococcus elongatus (strain ATCC 33912 / PCC 7942 / FACHB-805) (Anacystis nidulans R2).